The sequence spans 593 residues: Arginine--tRNA ligase (593 aa).

The 'HIGH' region signature appears at 138–148 (ANPTGPLHVGH).

Belongs to the class-I aminoacyl-tRNA synthetase family. In terms of assembly, monomer.

It localises to the cytoplasm. The enzyme catalyses tRNA(Arg) + L-arginine + ATP = L-arginyl-tRNA(Arg) + AMP + diphosphate. The protein is Arginine--tRNA ligase of Burkholderia cenocepacia (strain ATCC BAA-245 / DSM 16553 / LMG 16656 / NCTC 13227 / J2315 / CF5610) (Burkholderia cepacia (strain J2315)).